The primary structure comprises 117 residues: NADH-ubiquinone oxidoreductase chain 3 (117 aa).

3 helical membrane passes run 4–24 (FLGI…LLGL), 61–81 (LVAI…PWAL), and 86–106 (IGYF…VGFI).

It belongs to the complex I subunit 3 family.

The protein resides in the mitochondrion membrane. The catalysed reaction is a ubiquinone + NADH + 5 H(+)(in) = a ubiquinol + NAD(+) + 4 H(+)(out). Its function is as follows. Core subunit of the mitochondrial membrane respiratory chain NADH dehydrogenase (Complex I) that is believed to belong to the minimal assembly required for catalysis. Complex I functions in the transfer of electrons from NADH to the respiratory chain. The immediate electron acceptor for the enzyme is believed to be ubiquinone. The chain is NADH-ubiquinone oxidoreductase chain 3 (NAD3) from Prototheca wickerhamii.